The sequence spans 460 residues: Bifunctional protein GlmU (460 aa).

Residues 1-232 (MALNVVILAA…AIEVEGANNR (232 aa)) form a pyrophosphorylase region. UDP-N-acetyl-alpha-D-glucosamine is bound by residues 8–11 (LAAG), Lys22, Gln73, 78–79 (GT), 100–102 (YGD), Gly137, Glu157, Asn172, and Asn230. Asp102 is a Mg(2+) binding site. Asn230 contributes to the Mg(2+) binding site. Residues 233–253 (VQLAQLERAYQAREAEKLMLA) form a linker region. Positions 254–460 (GANLRDPSRI…GWQRPVKIKK (207 aa)) are N-acetyltransferase. UDP-N-acetyl-alpha-D-glucosamine is bound by residues Arg336 and Lys354. The active-site Proton acceptor is His366. UDP-N-acetyl-alpha-D-glucosamine contacts are provided by Tyr369 and Asn380. Acetyl-CoA-binding positions include Ala383, 389–390 (NY), Ser408, Ala426, and Arg443.

The protein in the N-terminal section; belongs to the N-acetylglucosamine-1-phosphate uridyltransferase family. It in the C-terminal section; belongs to the transferase hexapeptide repeat family. As to quaternary structure, homotrimer. It depends on Mg(2+) as a cofactor.

The protein localises to the cytoplasm. The enzyme catalyses alpha-D-glucosamine 1-phosphate + acetyl-CoA = N-acetyl-alpha-D-glucosamine 1-phosphate + CoA + H(+). It catalyses the reaction N-acetyl-alpha-D-glucosamine 1-phosphate + UTP + H(+) = UDP-N-acetyl-alpha-D-glucosamine + diphosphate. The protein operates within nucleotide-sugar biosynthesis; UDP-N-acetyl-alpha-D-glucosamine biosynthesis; N-acetyl-alpha-D-glucosamine 1-phosphate from alpha-D-glucosamine 6-phosphate (route II): step 2/2. Its pathway is nucleotide-sugar biosynthesis; UDP-N-acetyl-alpha-D-glucosamine biosynthesis; UDP-N-acetyl-alpha-D-glucosamine from N-acetyl-alpha-D-glucosamine 1-phosphate: step 1/1. It functions in the pathway bacterial outer membrane biogenesis; LPS lipid A biosynthesis. Catalyzes the last two sequential reactions in the de novo biosynthetic pathway for UDP-N-acetylglucosamine (UDP-GlcNAc). The C-terminal domain catalyzes the transfer of acetyl group from acetyl coenzyme A to glucosamine-1-phosphate (GlcN-1-P) to produce N-acetylglucosamine-1-phosphate (GlcNAc-1-P), which is converted into UDP-GlcNAc by the transfer of uridine 5-monophosphate (from uridine 5-triphosphate), a reaction catalyzed by the N-terminal domain. The polypeptide is Bifunctional protein GlmU (Shewanella baltica (strain OS223)).